The chain runs to 124 residues: Small ribosomal subunit protein uS12 (124 aa).

Position 89 is a 3-methylthioaspartic acid (D89). The disordered stretch occupies residues 102–124; the sequence is LDTSGVNNRKHGRSKYGTKRPKS. A compositionally biased stretch (basic residues) spans 109–124; the sequence is NRKHGRSKYGTKRPKS.

Belongs to the universal ribosomal protein uS12 family. As to quaternary structure, part of the 30S ribosomal subunit. Contacts proteins S8 and S17. May interact with IF1 in the 30S initiation complex.

In terms of biological role, with S4 and S5 plays an important role in translational accuracy. Its function is as follows. Interacts with and stabilizes bases of the 16S rRNA that are involved in tRNA selection in the A site and with the mRNA backbone. Located at the interface of the 30S and 50S subunits, it traverses the body of the 30S subunit contacting proteins on the other side and probably holding the rRNA structure together. The combined cluster of proteins S8, S12 and S17 appears to hold together the shoulder and platform of the 30S subunit. The sequence is that of Small ribosomal subunit protein uS12 from Francisella tularensis subsp. novicida (strain U112).